The primary structure comprises 302 residues: Homoserine O-acetyltransferase (302 aa).

The active-site Acyl-thioester intermediate is Cys-142. Positions 163 and 192 each coordinate substrate. The active-site Proton acceptor is the His-235. Residue Glu-237 is part of the active site. Arg-249 is a binding site for substrate.

The protein belongs to the MetA family.

The protein resides in the cytoplasm. The catalysed reaction is L-homoserine + acetyl-CoA = O-acetyl-L-homoserine + CoA. The protein operates within amino-acid biosynthesis; L-methionine biosynthesis via de novo pathway; O-acetyl-L-homoserine from L-homoserine: step 1/1. Its function is as follows. Transfers an acetyl group from acetyl-CoA to L-homoserine, forming acetyl-L-homoserine. The protein is Homoserine O-acetyltransferase of Bacillus licheniformis (strain ATCC 14580 / DSM 13 / JCM 2505 / CCUG 7422 / NBRC 12200 / NCIMB 9375 / NCTC 10341 / NRRL NRS-1264 / Gibson 46).